We begin with the raw amino-acid sequence, 382 residues long: Alpha-methylacyl-CoA racemase (382 aa).

Substrate is bound by residues arginine 36 and 55–58 (LDLK). N6-acetyllysine is present on lysine 58. At lysine 87 the chain carries N6-acetyllysine; alternate. N6-succinyllysine; alternate is present on lysine 87. Position 121 to 126 (121 to 126 (GHDINY)) interacts with substrate. Histidine 122 serves as the catalytic Proton acceptor. Residue aspartate 152 is the Proton donor of the active site. Lysine 268 is subject to N6-succinyllysine. Positions 380–382 (ASL) match the Microbody targeting signal motif.

It belongs to the CoA-transferase III family. As to quaternary structure, monomer.

It is found in the peroxisome. The protein resides in the mitochondrion. The enzyme catalyses a (2S)-2-methylacyl-CoA = a (2R)-2-methylacyl-CoA. It carries out the reaction (25R)-3alpha,7alpha,12alpha-trihydroxy-5beta-cholestan-26-oyl-CoA = (25S)-3alpha,7alpha,12alpha-trihydroxy-5beta-cholestan-26-oyl-CoA. The catalysed reaction is (2R,6)-dimethylheptanoyl-CoA = (2S,6)-dimethylheptanoyl-CoA. It functions in the pathway lipid metabolism; bile acid biosynthesis. The protein operates within lipid metabolism; fatty acid metabolism. In terms of biological role, catalyzes the interconversion of (R)- and (S)-stereoisomers of alpha-methyl-branched-chain fatty acyl-CoA esters. Acts only on coenzyme A thioesters, not on free fatty acids, and accepts as substrates a wide range of alpha-methylacyl-CoAs, including pristanoyl-CoA, trihydroxycoprostanoyl-CoA (an intermediate in bile acid synthesis), and arylpropionic acids like the anti-inflammatory drug ibuprofen (2-(4-isobutylphenyl)propionic acid) but neither 3-methyl-branched nor linear-chain acyl-CoAs. This Homo sapiens (Human) protein is Alpha-methylacyl-CoA racemase (AMACR).